The following is a 148-amino-acid chain: Protoporphyrinogen IX oxidase (148 aa).

Helical transmembrane passes span 7–27, 59–79, 86–106, and 128–148; these read YFLW…AALF, FIAS…LLIA, GGWL…HFYC, and FNEI…VKPF. His15 contacts heme. Lys92 is a binding site for heme.

Belongs to the HemJ family. In terms of assembly, homodimer. Requires heme b as cofactor.

Its subcellular location is the cell membrane. It carries out the reaction protoporphyrinogen IX + 3 A = protoporphyrin IX + 3 AH2. The protein operates within porphyrin-containing compound metabolism; protoporphyrin-IX biosynthesis; protoporphyrin-IX from protoporphyrinogen-IX: step 1/1. Functionally, catalyzes the oxidation of protoporphyrinogen IX to protoporphyrin IX. Is involved in the biosynthesis of tetrapyrrole molecules like heme. Does not use oxygen or artificial electron acceptors such as menadione or benzoquinone. The polypeptide is Protoporphyrinogen IX oxidase (Helicobacter pylori (strain J99 / ATCC 700824) (Campylobacter pylori J99)).